A 564-amino-acid polypeptide reads, in one-letter code: CTP synthase (564 aa).

Residues 1–272 are amidoligase domain; sequence MARPKNVKHI…DIRVLKKLGL (272 aa). Residue Ser18 coordinates CTP. Ser18 serves as a coordination point for UTP. 19–24 provides a ligand contact to ATP; that stretch reads SLGKGI. Tyr59 provides a ligand contact to L-glutamine. Asp76 is an ATP binding site. Asp76 and Glu146 together coordinate Mg(2+). Residues 153–155, 193–198, and Lys229 contribute to the CTP site; these read DIE and KTKPTQ. UTP contacts are provided by residues 193 to 198 and Lys229; that span reads KTKPTQ. One can recognise a Glutamine amidotransferase type-1 domain in the interval 299 to 543; sequence TIAICGKYTE…VAAAKEFAHG (245 aa). Gly363 provides a ligand contact to L-glutamine. The active-site Nucleophile; for glutamine hydrolysis is the Cys390. Residues 391–394, Glu414, and Arg471 each bind L-glutamine; that span reads LGMQ. Residues His516 and Glu518 contribute to the active site.

This sequence belongs to the CTP synthase family. In terms of assembly, homotetramer.

It catalyses the reaction UTP + L-glutamine + ATP + H2O = CTP + L-glutamate + ADP + phosphate + 2 H(+). It carries out the reaction L-glutamine + H2O = L-glutamate + NH4(+). The catalysed reaction is UTP + NH4(+) + ATP = CTP + ADP + phosphate + 2 H(+). It functions in the pathway pyrimidine metabolism; CTP biosynthesis via de novo pathway; CTP from UDP: step 2/2. With respect to regulation, allosterically activated by GTP, when glutamine is the substrate; GTP has no effect on the reaction when ammonia is the substrate. The allosteric effector GTP functions by stabilizing the protein conformation that binds the tetrahedral intermediate(s) formed during glutamine hydrolysis. Inhibited by the product CTP, via allosteric rather than competitive inhibition. Its function is as follows. Catalyzes the ATP-dependent amination of UTP to CTP with either L-glutamine or ammonia as the source of nitrogen. Regulates intracellular CTP levels through interactions with the four ribonucleotide triphosphates. This is CTP synthase from Prosthecochloris aestuarii (strain DSM 271 / SK 413).